A 698-amino-acid polypeptide reads, in one-letter code: Polyribonucleotide nucleotidyltransferase (698 aa).

The Mg(2+) site is built by D486 and D492. The region spanning 553 to 612 is the KH domain; sequence PRIIVRNIPKDRIGELIGPGGKNVRGISELTGAELYIEDDGKVTISGSNQESAEKAAKMV. An S1 motif domain is found at 622 to 690; the sequence is GKIYEGKVKR…KTGKIDLSRK (69 aa).

It belongs to the polyribonucleotide nucleotidyltransferase family. Requires Mg(2+) as cofactor.

It localises to the cytoplasm. The catalysed reaction is RNA(n+1) + phosphate = RNA(n) + a ribonucleoside 5'-diphosphate. In terms of biological role, involved in mRNA degradation. Catalyzes the phosphorolysis of single-stranded polyribonucleotides processively in the 3'- to 5'-direction. The chain is Polyribonucleotide nucleotidyltransferase from Leptospira interrogans serogroup Icterohaemorrhagiae serovar copenhageni (strain Fiocruz L1-130).